The sequence spans 271 residues: Small ribosomal subunit protein uS2 (271 aa).

The span at 229-242 shows a compositional bias: basic and acidic residues; the sequence is KERKGKDAEEELKK. The tract at residues 229-271 is disordered; the sequence is KERKGKDAEEELKKAAAPKAAPAAEAAPAAEAPAAPVVEAAAE. A compositionally biased stretch (low complexity) spans 243-271; it reads AAAPKAAPAAEAAPAAEAPAAPVVEAAAE.

The protein belongs to the universal ribosomal protein uS2 family.

This is Small ribosomal subunit protein uS2 from Nitratidesulfovibrio vulgaris (strain DSM 19637 / Miyazaki F) (Desulfovibrio vulgaris).